The following is a 155-amino-acid chain: Snaclec agkicetin-C subunit alpha (155 aa).

A signal peptide spans 1 to 23; the sequence is MGRFIFVSFGLLVVFLSLSGTAA. 3 cysteine pairs are disulfide-bonded: cysteine 25–cysteine 36, cysteine 53–cysteine 149, and cysteine 124–cysteine 141. The C-type lectin domain occupies 32-150; the sequence is YIRFCYQPFK…CGLKHVFMCK (119 aa).

It belongs to the snaclec family. Heterodimer of subunits alpha and beta; disulfide-linked. In terms of tissue distribution, expressed by the venom gland.

The protein resides in the secreted. Its function is as follows. Is a potent glycoprotein Ibalpha (GP1BA) antagonist. Concentration-dependently inhibits botrocetin-, ristocetin- and low dose thrombin-induced platelet aggregation. Inhibits platelet adhesion only through inhibiting the vWF interaction with GP1BA, but has minimal effect on other platelet receptors, such as alpha-IIb/beta-3 (ITGA2B/ITGB3) or alpha-2/beta-1 (ITGA2/ITGB1). Causes an instant severe thrombocytopenia in rats and is not lethal to mice. In Deinagkistrodon acutus (Hundred-pace snake), this protein is Snaclec agkicetin-C subunit alpha.